Consider the following 48-residue polypeptide: Fimbrial assembly protein, serogroup F1 (48 aa).

This chain is Fimbrial assembly protein, serogroup F1 (fimB), found in Dichelobacter nodosus (Bacteroides nodosus).